A 295-amino-acid polypeptide reads, in one-letter code: MGIPKIAGYPLPTPAEFPDNRTGWTIDPDQAVLLIHDMQEYFVNYYQPDSSPVVDIIQHIQRLKAAAKKAGIPVIYTAQPANQHPTDRALLTDFWGPGLNGDHVPIVEALSPEEGDIEYVKWRYSAFKKTPLLEFMRAQGKSQLIISGIYGHIGILSTTLDAFMLDIQPFVIGDAIADFTREDHLRTLEYVASRSGSVKRLDEALDEIRSQKPLTLEQIQQDVATSLGIQPDEVDLDEDLMFVGLDSMRAMVLVEKWHQQGENISFGQLMEAASLREWWLVIEQARNEEQTMAVA.

Residues 1–21 (MGIPKIAGYPLPTPAEFPDNR) are disordered. A Carrier domain is found at 207-286 (EIRSQKPLTL…EWWLVIEQAR (80 aa)). Residue Ser-247 is modified to O-(pantetheine 4'-phosphoryl)serine.

This sequence belongs to the isochorismatase family. Pantetheine 4'-phosphate serves as cofactor.

It carries out the reaction isochorismate + H2O = (2S,3S)-2,3-dihydroxy-2,3-dihydrobenzoate + pyruvate. It functions in the pathway siderophore biosynthesis; vulnibactin biosynthesis. Involved in the biosynthesis of the catechol siderophore vulnibactin. Vulnibactin is a chelating compound involved in transporting iron from the bacterial environment into the cell cytoplasm. The chain is Probable isochorismatase (venB) from Vibrio vulnificus (strain CMCP6).